Here is a 716-residue protein sequence, read N- to C-terminus: Translation initiation factor IF-2 (716 aa).

A disordered region spans residues 53–135 (GGAGVTSQKP…PLKPKKELPE (83 aa)). Positions 57-83 (VTSQKPAETNKNKPQGINQQPAGNQPN) are enriched in polar residues. Residues 93–109 (VQNNQFNKNKKNNNNNK) are compositionally biased toward low complexity. The 170-residue stretch at 217–386 (IRPPVVTIMG…LLVSEVEELK (170 aa)) folds into the tr-type G domain. Positions 226 to 233 (GHVDHGKT) are G1. GTP is bound at residue 226-233 (GHVDHGKT). The tract at residues 251 to 255 (GITQH) is G2. Positions 272-275 (DTPG) are G3. Residues 272 to 276 (DTPGH) and 326 to 329 (NKVD) each bind GTP. The segment at 326–329 (NKVD) is G4. The segment at 362 to 364 (SAL) is G5.

Belongs to the TRAFAC class translation factor GTPase superfamily. Classic translation factor GTPase family. IF-2 subfamily.

It is found in the cytoplasm. One of the essential components for the initiation of protein synthesis. Protects formylmethionyl-tRNA from spontaneous hydrolysis and promotes its binding to the 30S ribosomal subunits. Also involved in the hydrolysis of GTP during the formation of the 70S ribosomal complex. This is Translation initiation factor IF-2 from Bacillus velezensis (strain DSM 23117 / BGSC 10A6 / LMG 26770 / FZB42) (Bacillus amyloliquefaciens subsp. plantarum).